A 453-amino-acid polypeptide reads, in one-letter code: UPF0210 protein MM_0081 (453 aa).

Belongs to the UPF0210 family.

The polypeptide is UPF0210 protein MM_0081 (Methanosarcina mazei (strain ATCC BAA-159 / DSM 3647 / Goe1 / Go1 / JCM 11833 / OCM 88) (Methanosarcina frisia)).